The primary structure comprises 156 residues: Transcription factor MafK (156 aa).

The segment at 1–21 is disordered; the sequence is MTTNPKPNKALKVKEESGENA. The interval 51 to 76 is basic motif; it reads RLKQRRRTLKNRGYAASCRIKRVTQK. The bZIP domain maps to 51 to 114; it reads RLKQRRRTLK…DALRSKYEAL (64 aa). Residues 79–93 are leucine-zipper; sequence LERQRVELQQEVEKL.

It belongs to the bZIP family. Maf subfamily. In terms of assembly, homodimer or heterodimer.

Its subcellular location is the nucleus. In terms of biological role, since they lack a putative transactivation domain, the small Mafs behave as transcriptional repressors when they dimerize among themselves. However, they act as transcriptional activators by dimerizing with other (usually larger) basic-zipper proteins and recruiting them to specific DNA-binding sites. Small Maf proteins heterodimerize with Fos and may act as competitive repressors of the NF-E2 transcription factor. The polypeptide is Transcription factor MafK (MAFK) (Gallus gallus (Chicken)).